Reading from the N-terminus, the 136-residue chain is Nucleoside diphosphate kinase (136 aa).

ATP-binding residues include K10, F58, R86, T92, R104, and N114. The Pros-phosphohistidine intermediate role is filled by H117.

This sequence belongs to the NDK family. In terms of assembly, homotetramer. It depends on Mg(2+) as a cofactor.

The protein resides in the cytoplasm. It carries out the reaction a 2'-deoxyribonucleoside 5'-diphosphate + ATP = a 2'-deoxyribonucleoside 5'-triphosphate + ADP. It catalyses the reaction a ribonucleoside 5'-diphosphate + ATP = a ribonucleoside 5'-triphosphate + ADP. Functionally, major role in the synthesis of nucleoside triphosphates other than ATP. The ATP gamma phosphate is transferred to the NDP beta phosphate via a ping-pong mechanism, using a phosphorylated active-site intermediate. This Saccharopolyspora erythraea (strain ATCC 11635 / DSM 40517 / JCM 4748 / NBRC 13426 / NCIMB 8594 / NRRL 2338) protein is Nucleoside diphosphate kinase.